Reading from the N-terminus, the 404-residue chain is MSAEREATEAATVAAAAEARAETGAGEGAPSQPPTVEVASDPQPPPAPEASASASAPPLRCLVLTGFGGYDKVKLQSRPAVPPAPGPGQVTLRVRACGLNFADLMGRQGLYDRLPPLPVTPGMEGAGVVVAVGEGVSDRKAGDRVMVLNRSGMWQEEVTVPSAQTFLMPEAMTFEEAAALLVNYITAYMVLFDFGNLRPGHSVLVHMAAGGVGMAALQLCRTVENVTVFGTASASKHEVLKENGVTHPIDYHTTDYVDEIKKISPKGVDIVMDPLGGSDTAKGYHLLKPMGKVVTYGMANLLTGPKRNLMAMARTWWNQFSVTALQLLQANRAVCGFHLGYLDGEVELVSRVVTHLLALYNQGHIKPRIDSVWPFEKVADAMRQMQEKKNIGKVLLVPGPEKET.

The tract at residues 1–55 (MSAEREATEAATVAAAAEARAETGAGEGAPSQPPTVEVASDPQPPPAPEASASAS) is disordered. At serine 2 the chain carries N-acetylserine. Phosphoserine is present on serine 2. Positions 9 to 24 (EAATVAAAAEARAETG) are enriched in low complexity. Serine 31 and serine 40 each carry phosphoserine.

This sequence belongs to the zinc-containing alcohol dehydrogenase family. Quinone oxidoreductase subfamily. In terms of assembly, interacts with MFN1 and MFN2. As to expression, ubiquitously expressed.

It localises to the cytoplasm. The protein localises to the mitochondrion outer membrane. Its function is as follows. Plays a part in calcium-regulated keratinocyte activation in epidermal repair mechanisms. Has no effect on cell proliferation. Possesses ATPase activity. May negatively regulate mitochondrial fusion. In Rattus norvegicus (Rat), this protein is Synaptic vesicle membrane protein VAT-1 homolog (Vat1).